A 132-amino-acid polypeptide reads, in one-letter code: Small ribosomal subunit protein uS8 (132 aa).

The protein belongs to the universal ribosomal protein uS8 family. As to quaternary structure, part of the 30S ribosomal subunit. Contacts proteins S5 and S12.

Its function is as follows. One of the primary rRNA binding proteins, it binds directly to 16S rRNA central domain where it helps coordinate assembly of the platform of the 30S subunit. In Bartonella henselae (strain ATCC 49882 / DSM 28221 / CCUG 30454 / Houston 1) (Rochalimaea henselae), this protein is Small ribosomal subunit protein uS8.